A 369-amino-acid chain; its full sequence is RAB6-interacting golgin (369 aa).

Residues 1 to 128 (MAQGWAGFSE…HNNVEILPPK (128 aa)) are disordered. The span at 11–27 (EELRRLKQTKDPFEPQR) shows a compositional bias: basic and acidic residues. Composition is skewed to polar residues over residues 46-61 (EQSQKLGLQDGSTSLL) and 82-93 (SPTLPSHFTLTS). Over residues 106-120 (QPKELGLENSHDGHN) the composition is skewed to basic and acidic residues. Residues 145–297 (RWEVLQQEQR…EVERLLHEQE (153 aa)) are a coiled coil. Positions 188–369 (IQKELQALDD…GNDISAALAT (182 aa)) are necessary for interaction with RCHY1. The interval 334–369 (VSPKVDDQCGNSSSIPFLSPNCPNQEGNDISAALAT) is disordered. Positions 342-361 (CGNSSSIPFLSPNCPNQEGN) are enriched in polar residues.

It belongs to the GORAB family. As to quaternary structure, interacts with SCYL1. Interacts with RCHY1 and RAB6A/RAB6.

Its subcellular location is the cytoplasm. The protein localises to the golgi apparatus. The chain is RAB6-interacting golgin (GORAB) from Homo sapiens (Human).